The sequence spans 328 residues: Transcription initiation factor IIE subunit beta (328 aa).

The tract at residues 32 to 105 (QKKTNDTVIT…SSPSKKVRPG (74 aa)) is disordered. Ser-52 bears the Phosphoserine mark. Residues 85–94 (LDDDDDDEDF) are compositionally biased toward acidic residues. Ser-97 and Ser-106 each carry phosphoserine. The TFIIE beta DNA-binding region spans 113 to 187 (QANQTDISKS…FKYLSTYDVH (75 aa)).

It belongs to the TFIIE beta subunit family. As to quaternary structure, TFIIE is a tetramer of two alpha (TFA1) and two beta (TFA2) subunits.

The protein resides in the nucleus. Recruits TFIIH to the initiation complex and stimulates the RNA polymerase II C-terminal domain kinase and DNA-dependent ATPase activities of TFIIH. Both TFIIH and TFIIE are required for promoter clearance by RNA polymerase. This is Transcription initiation factor IIE subunit beta (TFA2) from Saccharomyces cerevisiae (strain ATCC 204508 / S288c) (Baker's yeast).